We begin with the raw amino-acid sequence, 216 residues long: Talanin (216 aa).

As to expression, isoform 4 is expressed in placenta, lung, kidney and pancreas.

May play a role in uric acid excretion. In Homo sapiens (Human), this protein is Talanin (ZNF365).